The sequence spans 252 residues: Uracil-DNA glycosylase (252 aa).

The active-site Proton acceptor is Asp78.

The protein belongs to the uracil-DNA glycosylase (UDG) superfamily. UNG family.

The protein resides in the cytoplasm. It carries out the reaction Hydrolyzes single-stranded DNA or mismatched double-stranded DNA and polynucleotides, releasing free uracil.. Functionally, excises uracil residues from the DNA which can arise as a result of misincorporation of dUMP residues by DNA polymerase or due to deamination of cytosine. The protein is Uracil-DNA glycosylase of Bordetella avium (strain 197N).